We begin with the raw amino-acid sequence, 295 residues long: Nucleotide-binding protein BPUM_3115 (295 aa).

Residue glycine 16–threonine 23 coordinates ATP. Residue aspartate 67–glycine 70 coordinates GTP.

This sequence belongs to the RapZ-like family.

In terms of biological role, displays ATPase and GTPase activities. In Bacillus pumilus (strain SAFR-032), this protein is Nucleotide-binding protein BPUM_3115.